The primary structure comprises 227 residues: Ribonuclease HII (227 aa).

In terms of domain architecture, RNase H type-2 spans Met1–Lys210. The a divalent metal cation site is built by Asp7, Glu8, and Asp105.

It belongs to the RNase HII family. Mn(2+) is required as a cofactor. The cofactor is Mg(2+).

It localises to the cytoplasm. It carries out the reaction Endonucleolytic cleavage to 5'-phosphomonoester.. In terms of biological role, endonuclease that specifically degrades the RNA of RNA-DNA hybrids. This is Ribonuclease HII from Thermococcus onnurineus (strain NA1).